An 81-amino-acid chain; its full sequence is Sulfur carrier protein TusA (81 aa).

The Cysteine persulfide intermediate role is filled by Cys19.

Belongs to the sulfur carrier protein TusA family.

The protein localises to the cytoplasm. Functionally, sulfur carrier protein which probably makes part of a sulfur-relay system. This chain is Sulfur carrier protein TusA, found in Shewanella oneidensis (strain ATCC 700550 / JCM 31522 / CIP 106686 / LMG 19005 / NCIMB 14063 / MR-1).